Reading from the N-terminus, the 422-residue chain is UDP-N-acetylglucosamine 1-carboxyvinyltransferase (422 aa).

Lysine 22–asparagine 23 provides a ligand contact to phosphoenolpyruvate. Residue arginine 95 coordinates UDP-N-acetyl-alpha-D-glucosamine. Cysteine 119 (proton donor) is an active-site residue. Cysteine 119 is subject to 2-(S-cysteinyl)pyruvic acid O-phosphothioketal. UDP-N-acetyl-alpha-D-glucosamine contacts are provided by residues arginine 124 to glutamine 128, aspartate 309, and valine 331.

This sequence belongs to the EPSP synthase family. MurA subfamily.

Its subcellular location is the cytoplasm. It carries out the reaction phosphoenolpyruvate + UDP-N-acetyl-alpha-D-glucosamine = UDP-N-acetyl-3-O-(1-carboxyvinyl)-alpha-D-glucosamine + phosphate. It participates in cell wall biogenesis; peptidoglycan biosynthesis. Its function is as follows. Cell wall formation. Adds enolpyruvyl to UDP-N-acetylglucosamine. The sequence is that of UDP-N-acetylglucosamine 1-carboxyvinyltransferase from Anaeromyxobacter sp. (strain K).